The sequence spans 316 residues: 2,3-dihydroxyphenylpropionate/2,3-dihydroxicinnamic acid 1,2-dioxygenase (316 aa).

His115 functions as the Proton donor in the catalytic mechanism. Residue His180 is the Proton acceptor of the active site.

The protein belongs to the LigB/MhpB extradiol dioxygenase family. As to quaternary structure, homotetramer. Fe(2+) serves as cofactor.

The catalysed reaction is 3-(2,3-dihydroxyphenyl)propanoate + O2 = (2Z,4E)-2-hydroxy-6-oxonona-2,4-dienedioate + H(+). The enzyme catalyses (2E)-3-(2,3-dihydroxyphenyl)prop-2-enoate + O2 = (2Z,4E,7E)-2-hydroxy-6-oxonona-2,4,7-trienedioate + H(+). It participates in aromatic compound metabolism; 3-phenylpropanoate degradation. In terms of biological role, catalyzes the non-heme iron(II)-dependent oxidative cleavage of 2,3-dihydroxyphenylpropionic acid and 2,3-dihydroxicinnamic acid into 2-hydroxy-6-ketononadienedioate and 2-hydroxy-6-ketononatrienedioate, respectively. This is 2,3-dihydroxyphenylpropionate/2,3-dihydroxicinnamic acid 1,2-dioxygenase from Rhodococcus rhodochrous.